The following is an 821-amino-acid chain: Cation/H(+) antiporter 15 (821 aa).

A run of 13 helical transmembrane segments spans residues 37 to 57, 65 to 82, 97 to 117, 131 to 151, 166 to 186, 200 to 220, 228 to 248, 268 to 288, 292 to 312, 318 to 338, 350 to 370, 378 to 398, and 410 to 430; these read LPLF…FVFI, RVIS…SVLG, VMVL…LVGV, ALTI…AFSF, ILFL…RILA, MSAA…AIAL, FASL…VFVV, FHIC…DAIG, VFGA…LTLI, FVSG…TNIA, FLVI…VAFF, GITL…VLNV, and FATM…IVTI. Residues 800 to 821 are disordered; it reads DFPESPVHSHETKVTYGLENPR.

It belongs to the monovalent cation:proton antiporter 2 (CPA2) transporter (TC 2.A.37) family. CHX (TC 2.A.37.4) subfamily. As to expression, specifically expressed in pollen.

The protein localises to the membrane. Functionally, may operate as a cation/H(+) antiporter. In Arabidopsis thaliana (Mouse-ear cress), this protein is Cation/H(+) antiporter 15 (CHX15).